A 104-amino-acid polypeptide reads, in one-letter code: Flagellar hook-basal body complex protein FliE (104 aa).

This sequence belongs to the FliE family.

The protein localises to the bacterial flagellum basal body. This Enterobacter sp. (strain 638) protein is Flagellar hook-basal body complex protein FliE.